Reading from the N-terminus, the 156-residue chain is Small ribosomal subunit protein uS7 (156 aa).

This sequence belongs to the universal ribosomal protein uS7 family. In terms of assembly, part of the 30S ribosomal subunit. Contacts proteins S9 and S11.

In terms of biological role, one of the primary rRNA binding proteins, it binds directly to 16S rRNA where it nucleates assembly of the head domain of the 30S subunit. Is located at the subunit interface close to the decoding center, probably blocks exit of the E-site tRNA. This chain is Small ribosomal subunit protein uS7, found in Clavibacter michiganensis subsp. michiganensis (strain NCPPB 382).